We begin with the raw amino-acid sequence, 456 residues long: Probable multidrug resistance protein NorM (456 aa).

12 consecutive transmembrane segments (helical) span residues 13 to 34, 54 to 76, 95 to 117, 132 to 154, 161 to 183, 193 to 215, 244 to 266, 286 to 308, 321 to 343, 358 to 380, 387 to 409, and 414 to 436; these read QFLTIFTPIVITQLTLFSMTFF, SSFWAPVNAAFSGLLMAITPIIA, LYIALFLAFILILINFLVVPMIL, HFLNGICIGIPAFFISAILRSFI, RVTMLITLCTVPFNIFLNYCFIF, GAGSGYATGITYWLVVLVSVILI, IGVPNGLTILFETSIFSAVTILM, LLYAFPLSVASTLTILGGYETGA, GMAAAILIGCVNGAILFFFRDII, MHFLVYAILFQFADAVLSPVLGA, VTVTSIVAFISYWLIGLPVGYGL, and LGPFGYWIGLSTGLFVAAFILSI.

It belongs to the multi antimicrobial extrusion (MATE) (TC 2.A.66.1) family.

The protein resides in the cell membrane. In terms of biological role, multidrug efflux pump. The chain is Probable multidrug resistance protein NorM (norM) from Listeria monocytogenes serovar 1/2a (strain ATCC BAA-679 / EGD-e).